Reading from the N-terminus, the 213-residue chain is Nicolin-1 (213 aa).

Part of the neuronal tubulin polyglutamylase complex which contains TPGS1, TPGS2, TTLL1, LRRC49 and NICN1. High expression level is found in brain, testis, liver and kidney. Weak expression in spleen, leukocytes, small intestine and colon.

The protein resides in the nucleus. The chain is Nicolin-1 (NICN1) from Homo sapiens (Human).